The following is a 112-amino-acid chain: Nucleoid-associated protein Pfl01_1806 (112 aa).

It belongs to the YbaB/EbfC family. In terms of assembly, homodimer.

The protein localises to the cytoplasm. Its subcellular location is the nucleoid. Its function is as follows. Binds to DNA and alters its conformation. May be involved in regulation of gene expression, nucleoid organization and DNA protection. The protein is Nucleoid-associated protein Pfl01_1806 of Pseudomonas fluorescens (strain Pf0-1).